A 301-amino-acid chain; its full sequence is Dihydroorotate dehydrogenase B (NAD(+)), catalytic subunit (301 aa).

Residues Ser-21 and 45–46 contribute to the FMN site; that span reads KS. Residues Lys-45, 69 to 73, and Asn-125 contribute to the substrate site; that span reads NAVGL. Residue Asn-125 coordinates FMN. Cys-128 (nucleophile) is an active-site residue. Lys-163 and Ile-187 together coordinate FMN. 188-189 is a binding site for substrate; sequence NT. FMN is bound by residues Gly-213, 239 to 240, and 261 to 262; these read GG and GT.

This sequence belongs to the dihydroorotate dehydrogenase family. Type 1 subfamily. Heterotetramer of 2 PyrK and 2 PyrD type B subunits. FMN serves as cofactor.

The protein localises to the cytoplasm. The catalysed reaction is (S)-dihydroorotate + NAD(+) = orotate + NADH + H(+). Its pathway is pyrimidine metabolism; UMP biosynthesis via de novo pathway; orotate from (S)-dihydroorotate (NAD(+) route): step 1/1. Catalyzes the conversion of dihydroorotate to orotate with NAD(+) as electron acceptor. In Thermoplasma volcanium (strain ATCC 51530 / DSM 4299 / JCM 9571 / NBRC 15438 / GSS1), this protein is Dihydroorotate dehydrogenase B (NAD(+)), catalytic subunit (pyrD).